A 128-amino-acid polypeptide reads, in one-letter code: Transcription antitermination protein NusB (128 aa).

It belongs to the NusB family.

In terms of biological role, involved in transcription antitermination. Required for transcription of ribosomal RNA (rRNA) genes. Binds specifically to the boxA antiterminator sequence of the ribosomal RNA (rrn) operons. This chain is Transcription antitermination protein NusB, found in Listeria monocytogenes serotype 4b (strain CLIP80459).